We begin with the raw amino-acid sequence, 104 residues long: Ribonuclease P protein component 4 (104 aa).

Zn(2+) contacts are provided by Cys-63, Cys-66, Cys-89, and Cys-92.

Belongs to the eukaryotic/archaeal RNase P protein component 4 family. In terms of assembly, consists of a catalytic RNA component and at least 4-5 protein subunits. It depends on Zn(2+) as a cofactor.

It localises to the cytoplasm. The catalysed reaction is Endonucleolytic cleavage of RNA, removing 5'-extranucleotides from tRNA precursor.. Functionally, part of ribonuclease P, a protein complex that generates mature tRNA molecules by cleaving their 5'-ends. The sequence is that of Ribonuclease P protein component 4 from Methanoregula boonei (strain DSM 21154 / JCM 14090 / 6A8).